Here is a 296-residue protein sequence, read N- to C-terminus: Tyrosine recombinase XerC (296 aa).

The Core-binding (CB) domain occupies 1-84 (MEKIQQAYLY…TLRSFYEYWM (84 aa)). In terms of domain architecture, Tyr recombinase spans 105 to 286 (YLPHFFYEEE…TNEQLRKVYL (182 aa)). Active-site residues include Arg145, Lys169, His238, Arg241, and His264. Tyr273 acts as the O-(3'-phospho-DNA)-tyrosine intermediate in catalysis.

It belongs to the 'phage' integrase family. XerC subfamily. In terms of assembly, forms a cyclic heterotetrameric complex composed of two molecules of XerC and two molecules of XerD.

The protein localises to the cytoplasm. In terms of biological role, site-specific tyrosine recombinase, which acts by catalyzing the cutting and rejoining of the recombining DNA molecules. The XerC-XerD complex is essential to convert dimers of the bacterial chromosome into monomers to permit their segregation at cell division. It also contributes to the segregational stability of plasmids. The polypeptide is Tyrosine recombinase XerC (Staphylococcus saprophyticus subsp. saprophyticus (strain ATCC 15305 / DSM 20229 / NCIMB 8711 / NCTC 7292 / S-41)).